Consider the following 372-residue polypeptide: Probable leucine aminopeptidase MCYG_08380 (372 aa).

A signal peptide spans 1 to 19 (MKVSVLAAVAAFAAATAIA). Asparagine 96 carries an N-linked (GlcNAc...) asparagine glycan. The Zn(2+) site is built by histidine 175 and aspartate 194. N-linked (GlcNAc...) asparagine glycosylation is found at asparagine 195 and asparagine 219. Zn(2+) contacts are provided by glutamate 233 and aspartate 260. A disulfide bridge links cysteine 305 with cysteine 309. Histidine 338 provides a ligand contact to Zn(2+).

Belongs to the peptidase M28 family. M28E subfamily. Monomer. The cofactor is Zn(2+).

The protein resides in the secreted. Functionally, probable extracellular aminopeptidase which contributes to pathogenicity. This chain is Probable leucine aminopeptidase MCYG_08380, found in Arthroderma otae (strain ATCC MYA-4605 / CBS 113480) (Microsporum canis).